The sequence spans 206 residues: Protease (206 aa).

Active-site residues include H55, D72, and C122.

The protein belongs to the peptidase C5 family. In terms of assembly, interacts with protease cofactor pVI-C; this interaction is necessary for protease activation.

It is found in the virion. Its subcellular location is the host nucleus. The catalysed reaction is Cleaves proteins of the adenovirus and its host cell at two consensus sites: -Yaa-Xaa-Gly-Gly-|-Xaa- and -Yaa-Xaa-Gly-Xaa-|-Gly- (in which Yaa is Met, Ile or Leu, and Xaa is any amino acid).. With respect to regulation, requires DNA and protease cofactor for maximal activation. Inside nascent virions, becomes partially activated by binding to the viral DNA, allowing it to cleave the cofactor that binds to the protease and fully activates it. Actin, like the viral protease cofactor, seems to act as a cofactor in the cleavage of cytokeratin 18 and of actin itself. Cleaves viral precursor proteins (pTP, pIIIa, pVI, pVII, pVIII, and pX) inside newly assembled particles giving rise to mature virions. Protease complexed to its cofactor slides along the viral DNA to specifically locate and cleave the viral precursors. Mature virions have a weakened organization compared to the unmature virions, thereby facilitating subsequent uncoating. Without maturation, the particle lacks infectivity and is unable to uncoat. Late in adenovirus infection, in the cytoplasm, may participate in the cytoskeleton destruction. Cleaves host cell cytoskeletal keratins K7 and K18. The polypeptide is Protease (Fowl adenovirus A serotype 1 (strain CELO / Phelps) (FAdV-1)).